Consider the following 126-residue polypeptide: Fluoride-specific ion channel FluC 1 (126 aa).

4 helical membrane-spanning segments follow: residues 5-25 (FILA…LVGI), 39-59 (TLFI…LFAI), 69-89 (IFLI…SLDS), and 100-120 (AAGA…IAGI). Na(+) contacts are provided by Gly-77 and Thr-80.

It belongs to the fluoride channel Fluc/FEX (TC 1.A.43) family.

The protein resides in the cell inner membrane. It carries out the reaction fluoride(in) = fluoride(out). Na(+) is not transported, but it plays an essential structural role and its presence is essential for fluoride channel function. Functionally, fluoride-specific ion channel. Important for reducing fluoride concentration in the cell, thus reducing its toxicity. This chain is Fluoride-specific ion channel FluC 1, found in Nitrobacter hamburgensis (strain DSM 10229 / NCIMB 13809 / X14).